Reading from the N-terminus, the 431-residue chain is Glutamate-1-semialdehyde 2,1-aminomutase (431 aa).

Lys-269 is modified (N6-(pyridoxal phosphate)lysine).

The protein belongs to the class-III pyridoxal-phosphate-dependent aminotransferase family. HemL subfamily. In terms of assembly, homodimer. The cofactor is pyridoxal 5'-phosphate.

The protein resides in the cytoplasm. The catalysed reaction is (S)-4-amino-5-oxopentanoate = 5-aminolevulinate. It functions in the pathway porphyrin-containing compound metabolism; protoporphyrin-IX biosynthesis; 5-aminolevulinate from L-glutamyl-tRNA(Glu): step 2/2. The protein operates within porphyrin-containing compound metabolism; chlorophyll biosynthesis. This Chlorobium phaeobacteroides (strain DSM 266 / SMG 266 / 2430) protein is Glutamate-1-semialdehyde 2,1-aminomutase.